A 345-amino-acid chain; its full sequence is Anthranilate phosphoribosyltransferase (345 aa).

Residues Gly79, 82–83 (GD), Thr87, 89–92 (NVST), 106–114 (KHGNRAVSG), and Ser118 contribute to the 5-phospho-alpha-D-ribose 1-diphosphate site. Residue Gly79 coordinates anthranilate. Ser91 provides a ligand contact to Mg(2+). Asn109 provides a ligand contact to anthranilate. Arg164 contacts anthranilate. Asp223 and Glu224 together coordinate Mg(2+).

It belongs to the anthranilate phosphoribosyltransferase family. In terms of assembly, homodimer. Mg(2+) serves as cofactor.

The catalysed reaction is N-(5-phospho-beta-D-ribosyl)anthranilate + diphosphate = 5-phospho-alpha-D-ribose 1-diphosphate + anthranilate. It functions in the pathway amino-acid biosynthesis; L-tryptophan biosynthesis; L-tryptophan from chorismate: step 2/5. Functionally, catalyzes the transfer of the phosphoribosyl group of 5-phosphorylribose-1-pyrophosphate (PRPP) to anthranilate to yield N-(5'-phosphoribosyl)-anthranilate (PRA). The polypeptide is Anthranilate phosphoribosyltransferase (Sulfurisphaera tokodaii (strain DSM 16993 / JCM 10545 / NBRC 100140 / 7) (Sulfolobus tokodaii)).